Consider the following 173-residue polypeptide: MPRTQNKDNFIDKTFTVMADLIVKMMPINDKAKRAYVYYRDGLSAQNAGDYAEALENYEESLKLEESPFDRSETLKNMAIIYMSNGDEDLALDTYQRALDQNSNQPSCLKNMGLIYEKRGRTAQEAGLQDEADRLFDRAADVWTQAVRLYPGGYLDIENWLKTTGRSNIDVYF.

TPR repeat units lie at residues 35–68 (AYVY…EESP), 72–105 (SETL…NSNQ), and 120–153 (GRTA…YPGG).

It belongs to the Ycf3 family.

The protein localises to the cellular thylakoid membrane. Its function is as follows. Essential for the assembly of the photosystem I (PSI) complex. May act as a chaperone-like factor to guide the assembly of the PSI subunits. The sequence is that of Photosystem I assembly protein Ycf3 from Prochlorococcus marinus (strain MIT 9313).